A 623-amino-acid polypeptide reads, in one-letter code: Interferon-induced GTP-binding protein Mx3 (623 aa).

Residues 31–304 form the Dynamin-type G domain; that stretch reads DLALPAIAVI…LVHHIEKSLP (274 aa). The tract at residues 41 to 48 is G1 motif; sequence GDQSSGKS. Residue 41–48 coordinates GTP; it reads GDQSSGKS. The interval 66 to 68 is G2 motif; that stretch reads VTR. The G3 motif stretch occupies residues 142–145; that stretch reads DLPG. Residues 142–146 and 211–214 each bind GTP; these read DLPGI and TKPD. The interval 211–214 is G4 motif; that stretch reads TKPD. Positions 243–246 are G5 motif; the sequence is KCRG. The GED domain occupies 537 to 623; that stretch reads LQEMMLHLKS…MKARSYLVEF (87 aa).

This sequence belongs to the TRAFAC class dynamin-like GTPase superfamily. Dynamin/Fzo/YdjA family.

Its subcellular location is the cytoplasm. Functionally, does not inhibit strain RB-1 of the fish pathogen, infectious hematopoietic necrosis virus (IHNV). In Oncorhynchus mykiss (Rainbow trout), this protein is Interferon-induced GTP-binding protein Mx3.